Consider the following 1393-residue polypeptide: DNA-directed RNA polymerase subunit beta' (1393 aa).

Zn(2+) contacts are provided by Cys72, Cys74, Cys87, and Cys90. Mg(2+)-binding residues include Asp463, Asp465, and Asp467. Cys812, Cys887, Cys894, and Cys897 together coordinate Zn(2+).

The protein belongs to the RNA polymerase beta' chain family. As to quaternary structure, the RNAP catalytic core consists of 2 alpha, 1 beta, 1 beta' and 1 omega subunit. When a sigma factor is associated with the core the holoenzyme is formed, which can initiate transcription. Mg(2+) serves as cofactor. Zn(2+) is required as a cofactor.

The catalysed reaction is RNA(n) + a ribonucleoside 5'-triphosphate = RNA(n+1) + diphosphate. Functionally, DNA-dependent RNA polymerase catalyzes the transcription of DNA into RNA using the four ribonucleoside triphosphates as substrates. The sequence is that of DNA-directed RNA polymerase subunit beta' from Chlamydia caviae (strain ATCC VR-813 / DSM 19441 / 03DC25 / GPIC) (Chlamydophila caviae).